We begin with the raw amino-acid sequence, 399 residues long: UDP-N-acetylglucosamine--N-acetylmuramyl-(pentapeptide) pyrophosphoryl-undecaprenol N-acetylglucosamine transferase (399 aa).

Positions 1–21 (MTSRFGHSHHPRRGRSARARA) are enriched in basic residues. Positions 1–30 (MTSRFGHSHHPRRGRSARARAGRREGVQSN) are disordered. Residues 58–60 (TGG), Asn170, Arg206, Ser234, Ile288, and Gln333 each bind UDP-N-acetyl-alpha-D-glucosamine.

It belongs to the glycosyltransferase 28 family. MurG subfamily.

The protein resides in the cell inner membrane. It carries out the reaction di-trans,octa-cis-undecaprenyl diphospho-N-acetyl-alpha-D-muramoyl-L-alanyl-D-glutamyl-meso-2,6-diaminopimeloyl-D-alanyl-D-alanine + UDP-N-acetyl-alpha-D-glucosamine = di-trans,octa-cis-undecaprenyl diphospho-[N-acetyl-alpha-D-glucosaminyl-(1-&gt;4)]-N-acetyl-alpha-D-muramoyl-L-alanyl-D-glutamyl-meso-2,6-diaminopimeloyl-D-alanyl-D-alanine + UDP + H(+). Its pathway is cell wall biogenesis; peptidoglycan biosynthesis. In terms of biological role, cell wall formation. Catalyzes the transfer of a GlcNAc subunit on undecaprenyl-pyrophosphoryl-MurNAc-pentapeptide (lipid intermediate I) to form undecaprenyl-pyrophosphoryl-MurNAc-(pentapeptide)GlcNAc (lipid intermediate II). This is UDP-N-acetylglucosamine--N-acetylmuramyl-(pentapeptide) pyrophosphoryl-undecaprenol N-acetylglucosamine transferase from Acidovorax ebreus (strain TPSY) (Diaphorobacter sp. (strain TPSY)).